We begin with the raw amino-acid sequence, 116 residues long: Large ribosomal subunit protein uL18 (116 aa).

Belongs to the universal ribosomal protein uL18 family. As to quaternary structure, part of the 50S ribosomal subunit; part of the 5S rRNA/L5/L18/L25 subcomplex. Contacts the 5S and 23S rRNAs.

This is one of the proteins that bind and probably mediate the attachment of the 5S RNA into the large ribosomal subunit, where it forms part of the central protuberance. The polypeptide is Large ribosomal subunit protein uL18 (Azotobacter vinelandii (strain DJ / ATCC BAA-1303)).